A 492-amino-acid chain; its full sequence is Catalase isozyme 1 (492 aa).

Catalysis depends on residues histidine 65 and asparagine 138. Residue tyrosine 348 coordinates heme.

This sequence belongs to the catalase family. As to quaternary structure, homotetramer. Requires heme as cofactor. In terms of tissue distribution, high expression in seeds and early seedlings.

The protein resides in the glyoxysome. The catalysed reaction is 2 H2O2 = O2 + 2 H2O. Its function is as follows. Occurs in almost all aerobically respiring organisms and serves to protect cells from the toxic effects of hydrogen peroxide. This Cucurbita pepo (Vegetable marrow) protein is Catalase isozyme 1 (CAT1).